The sequence spans 313 residues: 3'-5' exoribonuclease YhaM (313 aa).

A DNA-binding region (OB) is located at residues 22–90; sequence SSVKGTASNG…QLKIRQIRQA (69 aa). Residues 163–279 enclose the HD domain; that stretch reads HVVSMLRLAK…LHQIDLMDAS (117 aa).

Belongs to the YhaM family.

In terms of biological role, shows a 3'-5' exoribonuclease activity. This is 3'-5' exoribonuclease YhaM from Listeria monocytogenes serovar 1/2a (strain ATCC BAA-679 / EGD-e).